We begin with the raw amino-acid sequence, 119 residues long: Flagellar transcriptional regulator FlhD (119 aa).

This sequence belongs to the FlhD family. Homodimer; disulfide-linked. Forms a heterohexamer composed of two FlhC and four FlhD subunits. Each FlhC binds a FlhD dimer, forming a heterotrimer, and a hexamer assembles by dimerization of two heterotrimers.

It is found in the cytoplasm. Its function is as follows. Functions in complex with FlhC as a master transcriptional regulator that regulates transcription of several flagellar and non-flagellar operons by binding to their promoter region. Activates expression of class 2 flagellar genes, including fliA, which is a flagellum-specific sigma factor that turns on the class 3 genes. Also regulates genes whose products function in a variety of physiological pathways. The polypeptide is Flagellar transcriptional regulator FlhD (Enterobacter sp. (strain 638)).